A 165-amino-acid polypeptide reads, in one-letter code: Large ribosomal subunit protein uL22c (165 aa).

It belongs to the universal ribosomal protein uL22 family. In terms of assembly, part of the 50S ribosomal subunit.

It localises to the plastid. The protein localises to the chloroplast. In terms of biological role, this protein binds specifically to 23S rRNA. The globular domain of the protein is located near the polypeptide exit tunnel on the outside of the subunit, while an extended beta-hairpin is found that lines the wall of the exit tunnel in the center of the 70S ribosome. The polypeptide is Large ribosomal subunit protein uL22c (rpl22) (Daucus carota (Wild carrot)).